A 316-amino-acid chain; its full sequence is 2,3-dihydroxyphenylpropionate/2,3-dihydroxicinnamic acid 1,2-dioxygenase (316 aa).

H115 serves as the catalytic Proton donor. H179 (proton acceptor) is an active-site residue.

The protein belongs to the LigB/MhpB extradiol dioxygenase family. In terms of assembly, homotetramer. Fe(2+) is required as a cofactor.

The enzyme catalyses 3-(2,3-dihydroxyphenyl)propanoate + O2 = (2Z,4E)-2-hydroxy-6-oxonona-2,4-dienedioate + H(+). It catalyses the reaction (2E)-3-(2,3-dihydroxyphenyl)prop-2-enoate + O2 = (2Z,4E,7E)-2-hydroxy-6-oxonona-2,4,7-trienedioate + H(+). Its pathway is aromatic compound metabolism; 3-phenylpropanoate degradation. Functionally, catalyzes the non-heme iron(II)-dependent oxidative cleavage of 2,3-dihydroxyphenylpropionic acid and 2,3-dihydroxicinnamic acid into 2-hydroxy-6-ketononadienedioate and 2-hydroxy-6-ketononatrienedioate, respectively. The protein is 2,3-dihydroxyphenylpropionate/2,3-dihydroxicinnamic acid 1,2-dioxygenase of Paraburkholderia xenovorans (strain LB400).